The chain runs to 153 residues: NADPH-dependent 7-cyano-7-deazaguanine reductase (153 aa).

The disordered stretch occupies residues 1 to 26 (MVKIHDGASQLGANVAAPRSPEEATL). The active-site Thioimide intermediate is the Cys-51. Asp-58 functions as the Proton donor in the catalytic mechanism. Residues 73–75 (VES) and 92–93 (HE) each bind substrate.

The protein belongs to the GTP cyclohydrolase I family. QueF type 1 subfamily.

The protein resides in the cytoplasm. The enzyme catalyses 7-aminomethyl-7-carbaguanine + 2 NADP(+) = 7-cyano-7-deazaguanine + 2 NADPH + 3 H(+). The protein operates within tRNA modification; tRNA-queuosine biosynthesis. Its function is as follows. Catalyzes the NADPH-dependent reduction of 7-cyano-7-deazaguanine (preQ0) to 7-aminomethyl-7-deazaguanine (preQ1). This is NADPH-dependent 7-cyano-7-deazaguanine reductase from Methylocella silvestris (strain DSM 15510 / CIP 108128 / LMG 27833 / NCIMB 13906 / BL2).